A 100-amino-acid polypeptide reads, in one-letter code: Integration host factor subunit alpha (100 aa).

The protein belongs to the bacterial histone-like protein family. Heterodimer of an alpha and a beta chain.

This protein is one of the two subunits of integration host factor, a specific DNA-binding protein that functions in genetic recombination as well as in transcriptional and translational control. The sequence is that of Integration host factor subunit alpha from Rhizorhabdus wittichii (strain DSM 6014 / CCUG 31198 / JCM 15750 / NBRC 105917 / EY 4224 / RW1) (Sphingomonas wittichii).